The chain runs to 101 residues: Protein Tat (101 aa).

The segment at 1–24 (MEPVDPSLDPWNHPGSQPTTPCTK) is interaction with human CREBBP. A transactivation region spans residues 1–48 (MEPVDPSLDPWNHPGSQPTTPCTKCYCKRCCFHCQWCFTTKGLGISYG). The Zn(2+) site is built by Cys-22, Cys-25, and Cys-27. Residues 22–37 (CTKCYCKRCCFHCQWC) are cysteine-rich. The residue at position 28 (Lys-28) is an N6-acetyllysine; by host PCAF. The Zn(2+) site is built by Cys-30, His-33, Cys-34, and Cys-37. Residues 38–48 (FTTKGLGISYG) are core. Basic residues predominate over residues 48-58 (GRKKRRQRHRT). Residues 48-101 (GRKKRRQRHRTPQSSQVHQNSLPKQPLSQARGDPTGPKESKKEVESKAKTDPCA) form a disordered region. Positions 49–57 (RKKRRQRHR) match the Nuclear localization signal, RNA-binding (TAR), and protein transduction motif. The tract at residues 49–86 (RKKRRQRHRTPQSSQVHQNSLPKQPLSQARGDPTGPKE) is interaction with the host capping enzyme RNGTT. 2 positions are modified to N6-acetyllysine; by host EP300 and GCN5L2: Lys-50 and Lys-51. An asymmetric dimethylarginine; by host PRMT6 mark is found at Arg-52 and Arg-53. A compositionally biased stretch (polar residues) spans 59-75 (PQSSQVHQNSLPKQPLS). A Glycyl lysine isopeptide (Lys-Gly) (interchain with G-Cter in ubiquitin) cross-link involves residue Lys-71. Positions 78–80 (RGD) match the Cell attachment site motif. Residues 83-101 (GPKESKKEVESKAKTDPCA) show a composition bias toward basic and acidic residues.

The protein belongs to the lentiviruses Tat family. Interacts with host CCNT1. Associates with the P-TEFb complex composed at least of Tat, P-TEFb (CDK9 and CCNT1), TAR RNA, RNA Pol II. Recruits the HATs CREBBP, TAF1/TFIID, EP300, PCAF and GCN5L2. Interacts with host KAT5/Tip60; this interaction targets the latter to degradation. Interacts with the host deacetylase SIRT1. Interacts with host capping enzyme RNGTT; this interaction stimulates RNGTT. Binds to host KDR, and to the host integrins ITGAV/ITGB3 and ITGA5/ITGB1. Interacts with host KPNB1/importin beta-1 without previous binding to KPNA1/importin alpha-1. Interacts with EIF2AK2. Interacts with host nucleosome assembly protein NAP1L1; this interaction may be required for the transport of Tat within the nucleus, since the two proteins interact at the nuclear rim. Interacts with host C1QBP/SF2P32; this interaction involves lysine-acetylated Tat. Interacts with the host chemokine receptors CCR2, CCR3 and CXCR4. Interacts with host DPP4/CD26; this interaction may trigger an anti-proliferative effect. Interacts with host LDLR. Interacts with the host extracellular matrix metalloproteinase MMP1. Interacts with host PRMT6; this interaction mediates Tat's methylation. Interacts with, and is ubiquitinated by MDM2/Hdm2. Interacts with host PSMC3 and HTATIP2. Interacts with STAB1; this interaction may overcome SATB1-mediated repression of IL2 and IL2RA (interleukin) in T cells by binding to the same domain than HDAC1. Interacts (when acetylated) with human CDK13, thereby increasing HIV-1 mRNA splicing and promoting the production of the doubly spliced HIV-1 protein Nef. Interacts with host TBP; this interaction modulates the activity of transcriptional pre-initiation complex. Interacts with host RELA. Interacts with host PLSCR1; this interaction negatively regulates Tat transactivation activity by altering its subcellular distribution. In terms of processing, asymmetrical arginine methylation by host PRMT6 seems to diminish the transactivation capacity of Tat and affects the interaction with host CCNT1. Post-translationally, acetylation by EP300, CREBBP, GCN5L2/GCN5 and PCAF regulates the transactivation activity of Tat. EP300-mediated acetylation of Lys-50 promotes dissociation of Tat from the TAR RNA through the competitive binding to PCAF's bromodomain. In addition, the non-acetylated Tat's N-terminus can also interact with PCAF. PCAF-mediated acetylation of Lys-28 enhances Tat's binding to CCNT1. Lys-50 is deacetylated by SIRT1. Polyubiquitination by host MDM2 does not target Tat to degradation, but activates its transactivation function and fosters interaction with CCNT1 and TAR RNA. In terms of processing, phosphorylated by EIF2AK2 on serine and threonine residues adjacent to the basic region important for TAR RNA binding and function. Phosphorylation of Tat by EIF2AK2 is dependent on the prior activation of EIF2AK2 by dsRNA.

The protein localises to the host nucleus. It localises to the host nucleolus. The protein resides in the host cytoplasm. Its subcellular location is the secreted. Functionally, transcriptional activator that increases RNA Pol II processivity, thereby increasing the level of full-length viral transcripts. Recognizes a hairpin structure at the 5'-LTR of the nascent viral mRNAs referred to as the transactivation responsive RNA element (TAR) and recruits the cyclin T1-CDK9 complex (P-TEFb complex) that will in turn hyperphosphorylate the RNA polymerase II to allow efficient elongation. The CDK9 component of P-TEFb and other Tat-activated kinases hyperphosphorylate the C-terminus of RNA Pol II that becomes stabilized and much more processive. Other factors such as HTATSF1/Tat-SF1, SUPT5H/SPT5, and HTATIP2 are also important for Tat's function. Besides its effect on RNA Pol II processivity, Tat induces chromatin remodeling of proviral genes by recruiting the histone acetyltransferases (HATs) CREBBP, EP300 and PCAF to the chromatin. This also contributes to the increase in proviral transcription rate, especially when the provirus integrates in transcriptionally silent region of the host genome. To ensure maximal activation of the LTR, Tat mediates nuclear translocation of NF-kappa-B by interacting with host RELA. Through its interaction with host TBP, Tat may also modulate transcription initiation. Tat can reactivate a latently infected cell by penetrating in it and transactivating its LTR promoter. In the cytoplasm, Tat is thought to act as a translational activator of HIV-1 mRNAs. In terms of biological role, extracellular circulating Tat can be endocytosed by surrounding uninfected cells via the binding to several surface receptors such as CD26, CXCR4, heparan sulfate proteoglycans (HSPG) or LDLR. Neurons are rarely infected, but they internalize Tat via their LDLR. Through its interaction with nuclear HATs, Tat is potentially able to control the acetylation-dependent cellular gene expression. Modulates the expression of many cellular genes involved in cell survival, proliferation or in coding for cytokines or cytokine receptors. Tat plays a role in T-cell and neurons apoptosis. Tat induced neurotoxicity and apoptosis probably contribute to neuroAIDS. Circulating Tat also acts as a chemokine-like and/or growth factor-like molecule that binds to specific receptors on the surface of the cells, affecting many cellular pathways. In the vascular system, Tat binds to ITGAV/ITGB3 and ITGA5/ITGB1 integrins dimers at the surface of endothelial cells and competes with bFGF for heparin-binding sites, leading to an excess of soluble bFGF. This is Protein Tat from Human immunodeficiency virus type 1 group M subtype F1 (isolate VI850) (HIV-1).